The primary structure comprises 205 residues: Adenylyl-sulfate kinase (205 aa).

ATP is bound at residue 31 to 38 (GLSGSGKS). S105 serves as the catalytic Phosphoserine intermediate.

Belongs to the APS kinase family.

It carries out the reaction adenosine 5'-phosphosulfate + ATP = 3'-phosphoadenylyl sulfate + ADP + H(+). It participates in sulfur metabolism; hydrogen sulfide biosynthesis; sulfite from sulfate: step 2/3. Catalyzes the synthesis of activated sulfate. The chain is Adenylyl-sulfate kinase from Shewanella halifaxensis (strain HAW-EB4).